The sequence spans 157 residues: 17.6 kDa class I heat shock protein 3 (157 aa).

One can recognise a sHSP domain in the interval 43–157; the sequence is DVAAFTNAKV…PEVKSIDISG (115 aa).

It belongs to the small heat shock protein (HSP20) family. May form oligomeric structures.

The protein resides in the cytoplasm. The chain is 17.6 kDa class I heat shock protein 3 (HSP17.6C) from Arabidopsis thaliana (Mouse-ear cress).